The chain runs to 545 residues: Carboxypeptidase Y homolog A (545 aa).

The signal sequence occupies residues 1–17 (MKSLALALLVGGAIAAG). Positions 18–123 (PQQQVLQAPV…KLEAYDLRVK (106 aa)) are excised as a propeptide. 5 disulfides stabilise this stretch: Cys-177–Cys-416, Cys-311–Cys-325, Cys-335–Cys-358, Cys-342–Cys-351, and Cys-380–Cys-386. Asn-208 carries N-linked (GlcNAc...) asparagine glycosylation. Ser-264 is an active-site residue. Asp-455 is an active-site residue. 3 N-linked (GlcNAc...) asparagine glycosylation sites follow: Asn-485, Asn-491, and Asn-506. Residue His-517 is part of the active site.

Belongs to the peptidase S10 family.

The protein resides in the vacuole. It catalyses the reaction Release of a C-terminal amino acid with broad specificity.. Vacuolar carboxypeptidase involved in degradation of small peptides. Digests preferentially peptides containing an aliphatic or hydrophobic residue in P1' position, as well as methionine, leucine or phenylalanine in P1 position of ester substrate. This chain is Carboxypeptidase Y homolog A (CPYA), found in Ajellomyces dermatitidis (strain ER-3 / ATCC MYA-2586) (Blastomyces dermatitidis).